Reading from the N-terminus, the 309-residue chain is Taste receptor type 2 member 46 (309 aa).

Met-1 is a topological domain (extracellular). Residues 2-22 (ITFLPITFSILIVVIFFIGNF) traverse the membrane as a helical segment. Over 23 to 46 (ANGFIALINSIEWVKRQKISFAGQ) the chain is Cytoplasmic. The helical transmembrane segment at 47–67 (ILTALAVSRVGLLWVLSLHWY) threads the bilayer. The Extracellular portion of the chain corresponds to 68-86 (ATEFNLAFHSVEVRSTAYN). Residues 87 to 107 (VWVVTNHFSNWLSTSLSMFYL) traverse the membrane as a helical segment. Residues 108–126 (LRIATFSNLIFLHLNRRVK) are Cytoplasmic-facing. A helical membrane pass occupies residues 127–147 (SVILVTLLGPLLFLVCQLFVM). Over 148–178 (NMNQIVRTKEYEGNMTWKIKLKSAMYLSNTT) the chain is Extracellular. 2 N-linked (GlcNAc...) asparagine glycosylation sites follow: Asn-161 and Asn-176. The helical transmembrane segment at 179 to 199 (VAMLANFVPLTLTLISFLLLI) threads the bilayer. The Cytoplasmic portion of the chain corresponds to 200–229 (CSLCKHLKKMRVHGKGSQDPSTKVHTKALQ). Residues 230-250 (IVTSFLLVCAIYFLSIILSVW) form a helical membrane-spanning segment. The Extracellular segment spans residues 251 to 259 (NSGGLENKP). Residues 260 to 280 (FFMFCQAIKFSYPSTHPFILI) traverse the membrane as a helical segment. Residues 281 to 309 (WGNKTLKQTFLSVLRNVRYWVKGQKPSSP) lie on the Cytoplasmic side of the membrane.

It belongs to the G-protein coupled receptor T2R family.

The protein resides in the membrane. The protein localises to the cell projection. It localises to the cilium membrane. Functionally, receptor that may play a role in the perception of bitterness and is gustducin-linked. May play a role in sensing the chemical composition of the gastrointestinal content. The activity of this receptor may stimulate alpha gustducin, mediate PLC-beta-2 activation and lead to the gating of TRPM5. In airway epithelial cells, binding of bitter compounds increases the intracellular calcium ion concentration and stimulates ciliary beat frequency. The polypeptide is Taste receptor type 2 member 46 (TAS2R46) (Papio hamadryas (Hamadryas baboon)).